A 372-amino-acid polypeptide reads, in one-letter code: Tubby-like F-box protein 9 (372 aa).

The segment at 1–51 is disordered; that stretch reads MALWRCSSSWLSSVSRSSGGVGGGESKVSPEIAPVSGGEGEGEEEEGEEER. Over residues 7-18 the composition is skewed to low complexity; that stretch reads SSSWLSSVSRSS. Residues 40 to 49 show a composition bias toward acidic residues; that stretch reads GEGEEEEGEE. Residues 50-105 form the F-box domain; sequence ERWSRLLPELLTEIMRRVDAGAERWPPRRDVVACACVCRRWRDAAVSVVRPPLECG.

It belongs to the TUB family. Ubiquitous.

The protein is Tubby-like F-box protein 9 (TULP9) of Oryza sativa subsp. japonica (Rice).